A 274-amino-acid polypeptide reads, in one-letter code: Rhamnulose-1-phosphate aldolase (274 aa).

The active site involves Glu117. The Zn(2+) site is built by His141, His143, and His212.

This sequence belongs to the aldolase class II family. RhaD subfamily. In terms of assembly, homotetramer. Zn(2+) is required as a cofactor.

The protein localises to the cytoplasm. It catalyses the reaction L-rhamnulose 1-phosphate = (S)-lactaldehyde + dihydroxyacetone phosphate. Its pathway is carbohydrate degradation; L-rhamnose degradation; glycerone phosphate from L-rhamnose: step 3/3. In terms of biological role, catalyzes the reversible cleavage of L-rhamnulose-1-phosphate to dihydroxyacetone phosphate (DHAP) and L-lactaldehyde. This is Rhamnulose-1-phosphate aldolase from Yersinia pseudotuberculosis serotype I (strain IP32953).